The primary structure comprises 126 residues: Small ribosomal subunit protein uS12 (126 aa).

Positions 1 to 28 (MPTINQLVRKGRRKVRTKSKSPALDGNP) are disordered. The segment covering 9-19 (RKGRRKVRTKS) has biased composition (basic residues). At aspartate 89 the chain carries 3-methylthioaspartic acid. A disordered region spans residues 106–126 (GVEKRRRSRSKYGVKRPKAAK). Positions 109–126 (KRRRSRSKYGVKRPKAAK) are enriched in basic residues.

The protein belongs to the universal ribosomal protein uS12 family. As to quaternary structure, part of the 30S ribosomal subunit. Contacts proteins S8 and S17. May interact with IF1 in the 30S initiation complex.

In terms of biological role, with S4 and S5 plays an important role in translational accuracy. Its function is as follows. Interacts with and stabilizes bases of the 16S rRNA that are involved in tRNA selection in the A site and with the mRNA backbone. Located at the interface of the 30S and 50S subunits, it traverses the body of the 30S subunit contacting proteins on the other side and probably holding the rRNA structure together. The combined cluster of proteins S8, S12 and S17 appears to hold together the shoulder and platform of the 30S subunit. The chain is Small ribosomal subunit protein uS12 from Opitutus terrae (strain DSM 11246 / JCM 15787 / PB90-1).